Here is a 381-residue protein sequence, read N- to C-terminus: 4-hydroxy-3-methylbut-2-en-1-yl diphosphate synthase (flavodoxin) (381 aa).

Positions 273, 276, 308, and 315 each coordinate [4Fe-4S] cluster.

It belongs to the IspG family. Requires [4Fe-4S] cluster as cofactor.

The catalysed reaction is (2E)-4-hydroxy-3-methylbut-2-enyl diphosphate + oxidized [flavodoxin] + H2O + 2 H(+) = 2-C-methyl-D-erythritol 2,4-cyclic diphosphate + reduced [flavodoxin]. Its pathway is isoprenoid biosynthesis; isopentenyl diphosphate biosynthesis via DXP pathway; isopentenyl diphosphate from 1-deoxy-D-xylulose 5-phosphate: step 5/6. Functionally, converts 2C-methyl-D-erythritol 2,4-cyclodiphosphate (ME-2,4cPP) into 1-hydroxy-2-methyl-2-(E)-butenyl 4-diphosphate. This is 4-hydroxy-3-methylbut-2-en-1-yl diphosphate synthase (flavodoxin) from Gluconobacter oxydans (strain 621H) (Gluconobacter suboxydans).